We begin with the raw amino-acid sequence, 300 residues long: MAEKSTLAASSALHLSFPPAASGVFHSRSITAVKVHPVALFSILDHYLRRDVSQPRVIGTLLGTRSESEVEVRNAFAVPHGESQDPWQIHLDAEHHRRMLDLHLRVRPDEVVLGWYSTNTELNSNSALIQDHYSRETAPHQAIHLTLNTNVADEANGLGVQCYVSALLGAMAKPEDCAFLSLPTHLLMSTPEQTALRHLAAPKPQNITDLDALKASLEDVQAKLDRVLTYVRRVLAGEVEGDKAVGRYLSDTIGVVPAGLDESLLESLFQSHLQDVFMVSYLSKLVSAQAEMSTRLVLLT.

One can recognise an MPN domain in the interval 33–169 (VKVHPVALFS…VQCYVSALLG (137 aa)).

Belongs to the eIF-3 subunit F family. In terms of assembly, component of the eukaryotic translation initiation factor 3 (eIF-3) complex.

Its subcellular location is the cytoplasm. Its function is as follows. Component of the eukaryotic translation initiation factor 3 (eIF-3) complex, which is involved in protein synthesis of a specialized repertoire of mRNAs and, together with other initiation factors, stimulates binding of mRNA and methionyl-tRNAi to the 40S ribosome. The eIF-3 complex specifically targets and initiates translation of a subset of mRNAs involved in cell proliferation. The sequence is that of Eukaryotic translation initiation factor 3 subunit F from Malassezia globosa (strain ATCC MYA-4612 / CBS 7966) (Dandruff-associated fungus).